Reading from the N-terminus, the 87-residue chain is FXYD domain-containing ion transport regulator 3 (87 aa).

A signal peptide spans 1–20; sequence MQKVTLGLLVFLAGFPVLDA. The Extracellular segment spans residues 21–38; the sequence is NDLEDKNSPFYYDWHSLQ. Residues 39–59 form a helical membrane-spanning segment; that stretch reads VGGLICAGVLCAMGIIIVMSA. The Cytoplasmic segment spans residues 60-87; the sequence is KCKCKFGQKSGHHPGETPPLITPGSAQS. Positions 66 to 87 are disordered; it reads GQKSGHHPGETPPLITPGSAQS.

Belongs to the FXYD family. In terms of assembly, regulatory subunit of the sodium/potassium-transporting ATPase which is composed of a catalytic alpha subunit, a non-catalytic beta subunit and an additional regulatory subunit. Interacts with catalytic alpha subunit ATP1A1. Also interacts with non-catalytic beta subunit ATP1B1. Interacts with the ATP1A1-ATP1B1, ATP1A2-ATP1B1 and ATP1A3-ATP1B1 NKA isozymes. Glutathionylated. As to expression, isoform 1: Expressed mainly in differentiated cells (at protein level). Isoform 2: Expressed mainly in undifferentiated cells (at protein level).

It localises to the cell membrane. Its function is as follows. Associates with and regulates the activity of the sodium/potassium-transporting ATPase (NKA) which transports Na(+) out of the cell and K(+) into the cell. Reduces glutathionylation of the NKA beta-1 subunit ATP1B1, thus reversing glutathionylation-mediated inhibition of ATP1B1. Induces a hyperpolarization-activated chloride current when expressed in Xenopus oocytes. Functionally, decreases the apparent K+ and Na+ affinity of the sodium/potassium-transporting ATPase over a large range of membrane potentials. In terms of biological role, decreases the apparent K+ affinity of the sodium/potassium-transporting ATPase only at slightly negative and positive membrane potentials and increases the apparent Na+ affinity over a large range of membrane potentials. This chain is FXYD domain-containing ion transport regulator 3 (FXYD3), found in Homo sapiens (Human).